The sequence spans 268 residues: Chymotrypsin-C (268 aa).

A signal peptide spans methionine 1–serine 16. Positions cysteine 17–arginine 29 are cleaved as a propeptide — activation peptide. Cystine bridges form between cysteine 17–cysteine 141, cysteine 59–cysteine 75, cysteine 155–cysteine 222, cysteine 186–cysteine 202, and cysteine 212–cysteine 243. N-linked (GlcNAc...) asparagine glycosylation occurs at asparagine 25. The Peptidase S1 domain maps to valine 30–glutamine 267. Residue histidine 74 is the Charge relay system of the active site. 2 N-linked (GlcNAc...) asparagine glycosylation sites follow: asparagine 79 and asparagine 90. Residue aspartate 121 is the Charge relay system of the active site. The N-linked (GlcNAc...) asparagine glycan is linked to asparagine 182. Residue serine 216 is the Charge relay system of the active site.

This sequence belongs to the peptidase S1 family. Elastase subfamily.

The enzyme catalyses Preferential cleavage: Leu-|-Xaa, Tyr-|-Xaa, Phe-|-Xaa, Met-|-Xaa, Trp-|-Xaa, Gln-|-Xaa, Asn-|-Xaa.. Functionally, regulates activation and degradation of trypsinogens and procarboxypeptidases by targeting specific cleavage sites within their zymogen precursors. Has chymotrypsin-type protease activity and hypocalcemic activity. Cleaves TRY4 and TRY5 and thereby inhibits their autoactivation. The polypeptide is Chymotrypsin-C (Ctrc) (Mus musculus (Mouse)).